We begin with the raw amino-acid sequence, 578 residues long: Acyl-coenzyme A synthetase ACSM5, mitochondrial (578 aa).

The N-terminal 22 residues, Met1 to Ile22, are a transit peptide targeting the mitochondrion. Lys96 carries the post-translational modification N6-acetyllysine; alternate. Residue Lys96 is modified to N6-succinyllysine; alternate. At Lys151 the chain carries N6-acetyllysine. Residue Thr229–Lys237 participates in ATP binding. Lys335 carries the post-translational modification N6-acetyllysine. ATP is bound by residues Glu367 to Ser372, Asp454, Arg469, and Lys565.

This sequence belongs to the ATP-dependent AMP-binding enzyme family. Requires Mg(2+) as cofactor. The cofactor is Mn(2+).

It localises to the mitochondrion matrix. It carries out the reaction a medium-chain fatty acid + ATP + CoA = a medium-chain fatty acyl-CoA + AMP + diphosphate. Catalyzes the activation of fatty acids by CoA to produce an acyl-CoA, the first step in fatty acid metabolism. This chain is Acyl-coenzyme A synthetase ACSM5, mitochondrial (Acsm5), found in Rattus norvegicus (Rat).